The sequence spans 297 residues: Probable endonuclease 4 (297 aa).

His69, His110, Glu145, Asp179, His182, His214, Asp227, His229, and Glu259 together coordinate Zn(2+).

This sequence belongs to the AP endonuclease 2 family. Requires Zn(2+) as cofactor.

It carries out the reaction Endonucleolytic cleavage to 5'-phosphooligonucleotide end-products.. Its function is as follows. Endonuclease IV plays a role in DNA repair. It cleaves phosphodiester bonds at apurinic or apyrimidinic (AP) sites, generating a 3'-hydroxyl group and a 5'-terminal sugar phosphate. The sequence is that of Probable endonuclease 4 from Bacillus licheniformis (strain ATCC 14580 / DSM 13 / JCM 2505 / CCUG 7422 / NBRC 12200 / NCIMB 9375 / NCTC 10341 / NRRL NRS-1264 / Gibson 46).